The following is a 969-amino-acid chain: MPPTETLRPGERGTAGGPGAGAPEQTYIVRQSNKYYEHRDSQATAMSVDYSGQWVLLAGRGHLALQRLGQDDGSLRRHERQSKYEVSVAEFAICPSRKEYCAIATSQHIDIVRWGTAEPHYEMSLRGHTRTVTDIDWHGKDPNLLVSCSIDTFSHIWDLREPRKPALSLNAVCMSGATQVGFNRVSGNLLAAAHDGDLRIWDIRKGSCPTHYITAHLNRVHGINWSHKRETCLATASQDGTVKYFDVCNPRRAEKIITTMSPVWRARYTPIGNGLVSIVVPHLGRGENSLLLWSNSKQTDPICSFVGHTDVILDFAWRPNRESSNEIELVTWSRDRTLRVWKIDDNMLKLCEPSAEEIESRFEPDLSELRVPTPPEFLHPRSILVAASLPISTGDGACNTLPMARSPSFGGGYYRREEPHIARSLTDQPTCSLHHEFSLLNTNMPHVEVDTLDAIKRYACFKICAGGHTVILQVTFTTSYPSPSAPPDFQLCQGTTLSSEVSGVLLKVLRCNALQRVKKSRTCLEQCLRALVAAMKKKVAAVGGADRSQLLLQSPRLEGALSSTLHDACIPYPRTSGVHFNAIGMLTTFAQPVNNKRLTLRQHTALTPRTFSSINGSGLLGNVMATAQREANASFYLQERMISGKPGKQRAIRQMNGSPVVHVYDTSSLLHISRRMAREFSLDKCNIAETCRKNGEICRQHGRLDLVPVWLLAELIATPQIPHETLNDLLFYKDPFKKSLLESLIMHYAISGDIQTAVLLACLFDKCPTGGGAIMEKTVRLPPQLNSQISPYHTVLPLDVKSSSSSNTWQQLKQLRSNSWSDSLDLEIKQIQSDAYACSLIRRTKMPLFDQFKRAYAEILFGWQLLSKRALILKHTQNTPPPVQGVEFVTECRKCAKPKRTPKCEPCKRPVLFCVLCRLPVKGAANACLACGHGGHIDHMMQWFEKHNVCATCGCKCLERTSELLALLS.

The segment at 1 to 24 (MPPTETLRPGERGTAGGPGAGAPE) is disordered. WD repeat units follow at residues 127-167 (GHTR…KPAL), 172-211 (VCMS…CPTH), 215-255 (AHLN…RAEK), 258-303 (TTMS…DPIC), and 307-351 (GHTD…LKLC). Threonine 373 is subject to Phosphothreonine. The region spanning 435–538 (HEFSLLNTNM…RALVAAMKKK (104 aa)) is the RWD domain. A C4-type zinc finger spans residues 891 to 911 (ECRKCAKPKRTPKCEPCKRPV). Residues cysteine 892, cysteine 895, cysteine 904, cysteine 907, cysteine 917, cysteine 928, histidine 933, histidine 936, histidine 939, cysteine 950, cysteine 953, cysteine 955, and cysteine 957 each coordinate Zn(2+). The segment at 912-960 (LFCVLCRLPVKGAANACLACGHGGHIDHMMQWFEKHNVCATCGCKCLER) adopts an RING-type; atypical zinc-finger fold.

The protein belongs to the WD repeat WDR59 family. Component of the GATOR complex consisting of mio, Nup44A/Seh1, Im11, Nplr3, Nplr2, Wdr24, Wdr59 and Sec13. Within the GATOR complex, probable component of the GATOR2 subcomplex which is likely composed of mio, Nup44A/Seh1, Wdr24, Wdr59 and Sec13. The GATOR2 complex associates with unmet in the absence of S-adenosyl-L-methionine; the mio-Wdr24-Nup44A subcomplex is essential and sufficient for this interaction while Wdr59 and Sec13 are dispensable. This association acts as a nutrient sensor to inhibit mTORC1 signaling in the absence of methionine.

The protein resides in the lysosome membrane. Functionally, a component of the GATOR complex, which functions as a regulator of the amino acid-sensing branch of the mTORC1 signaling pathway. The two GATOR subcomplexes, GATOR1 and GATOR2, regulate the mTORC1 pathway in order to mediate metabolic homeostasis, female gametogenesis and the response to amino acid limitation and complete starvation. GATOR2 activates the mTORC1 signaling pathway through the inhibition of the GATOR1 subcomplex, controlling the switch to cell proliferation and growth under nutrient replete conditions and during female oocyte development. Acts as an atypical component of the GATOR2 subcomplex, which can either promote or inhibit mTORC1 signaling, depending on tissues: inhibits mTORC1 activity by preventing the activity of GATOR2 in the ovary and the eye imaginal disk brain, while it promotes mTORC1 activity in the fat body. The chain is GATOR2 complex protein Wdr59 from Drosophila melanogaster (Fruit fly).